The primary structure comprises 526 residues: Peptide chain release factor 3 (526 aa).

One can recognise a tr-type G domain in the interval 9-277; it reads DKRRTFAIIS…GIVEWAPKPQ (269 aa). GTP-binding positions include 18 to 25, 86 to 90, and 140 to 143; these read SHPDAGKT, DTPGH, and NKLD.

It belongs to the TRAFAC class translation factor GTPase superfamily. Classic translation factor GTPase family. PrfC subfamily.

It localises to the cytoplasm. Its function is as follows. Increases the formation of ribosomal termination complexes and stimulates activities of RF-1 and RF-2. It binds guanine nucleotides and has strong preference for UGA stop codons. It may interact directly with the ribosome. The stimulation of RF-1 and RF-2 is significantly reduced by GTP and GDP, but not by GMP. The polypeptide is Peptide chain release factor 3 (Shewanella woodyi (strain ATCC 51908 / MS32)).